The following is a 325-amino-acid chain: D site-binding protein (325 aa).

3 disordered regions span residues 1–100, 124–198, and 212–255; these read MARP…PGLL, LEHG…DPDT, and LALS…EQKD. The span at 17-28 shows a compositional bias: gly residues; that stretch reads GPTGAPPGGGAL. 2 stretches are compositionally biased toward low complexity: residues 29–38 and 71–80; these read LGLRSLLQGT and AGPADASAGA. Ser-86 carries the post-translational modification Phosphoserine. Over residues 88-100 the composition is skewed to low complexity; sequence RGRPGAAPGPGLL. Pro residues predominate over residues 129 to 153; the sequence is PPSPPPPGGPSPAPSPVRTPAPSPR. Residues 166–176 show a composition bias toward low complexity; it reads PGHAPARAALG. Over residues 221–236 the composition is skewed to basic and acidic residues; that stretch reads ETFDPRRHRFSEEELK. In terms of domain architecture, bZIP spans 255–318; sequence DEKYWSRRYK…SHYRAVLSRY (64 aa). Residues 257–279 are basic motif; sequence KYWSRRYKNNEAAKRSRDARRLK. Positions 283–297 are leucine-zipper; sequence ISVRAAFLEKENALL.

Belongs to the bZIP family. PAR subfamily. Binds DNA as a homodimer or a heterodimer. Can form a heterodimer with TEF.

It is found in the nucleus. In terms of biological role, this transcriptional activator recognizes and binds to the sequence 5'-RTTAYGTAAY-3' found in the promoter of genes such as albumin, CYP2A4 and CYP2A5. It is not essential for circadian rhythm generation, but modulates important clock output genes. May be a direct target for regulation by the circadian pacemaker component clock. May affect circadian period and sleep regulation. The chain is D site-binding protein (DBP) from Bos taurus (Bovine).